We begin with the raw amino-acid sequence, 200 residues long: Putative peroxiredoxin sll0755 (200 aa).

The 159-residue stretch at Leu-5 to His-163 folds into the Thioredoxin domain. The active-site Cysteine sulfenic acid (-SOH) intermediate is Cys-50.

It belongs to the peroxiredoxin family. AhpC/Prx1 subfamily. Homodimer; disulfide-linked, upon oxidation.

It localises to the cytoplasm. The catalysed reaction is a hydroperoxide + [thioredoxin]-dithiol = an alcohol + [thioredoxin]-disulfide + H2O. Its function is as follows. Thiol-specific peroxidase that catalyzes the reduction of hydrogen peroxide and organic hydroperoxides to water and alcohols, respectively. Plays a role in cell protection against oxidative stress by detoxifying peroxides. This Synechocystis sp. (strain ATCC 27184 / PCC 6803 / Kazusa) protein is Putative peroxiredoxin sll0755.